A 416-amino-acid polypeptide reads, in one-letter code: cAMP-dependent protein kinase regulatory subunit (416 aa).

Positions 2–183 (VSSLPKESQA…RLEKSIRNNF (182 aa)) are dimerization and phosphorylation. Phosphoserine occurs at positions 3, 4, 9, 68, 70, 74, 77, 79, 81, 83, and 84. Residues 8-45 (ESQAELQLFQNEINAANPSDFLQFSANYFNKRLEQQRA) form a dimerization/docking domain (D/D) region. The segment at 65-138 (PEESFSRPQS…TSTPPLPMHF (74 aa)) is disordered. The span at 70–84 (SRPQSAQSQSRSRSS) shows a compositional bias: low complexity. T129 is modified (phosphothreonine). S130 carries the post-translational modification Phosphoserine. T131 and T144 each carry phosphothreonine. Positions 142–146 (RRTSV) match the Inhibitor sequence (IS) motif. S145 is subject to Phosphoserine; by autocatalysis. Phosphoserine is present on S147. A phosphothreonine mark is found at T150 and T160. 3',5'-cyclic AMP is bound by residues 184–301 (LFNK…KSMP), E249, R258, 302–416 (VLKS…PTRH), E368, and R377.

It belongs to the cAMP-dependent kinase regulatory chain family. The inactive holoenzyme of cAMP-dependent protein kinase is a tetramer, composed of 2 regulatory subunits (R, encoded by BCY1) and two catalytic subunits (C, encoded by the 3 partially redundant TPK1, TPK2, and TPK3 genes). Activation by cAMP causes dissociation of the holoenzyme, producing 2 active catalytic monomers C and a regulatory dimer R(2). Post-translationally, phosphorylated by YAK1 in response to glucose starvation. Phosphorylated by MCK1 at Thr-129 upon TOR complex 1 (TORC1) inhibition. Thr-129 phosphorylation activates BCY1 to inhibit PKA. TORC1 inhibits phosphorylation of RxxS/T sites but has no effect on Ser-145 phosphorylation. The phosphorylation sites can be clustered in several groups, all localized in the N-terminal part. The first cluster termed cluster I (CI) is located close to the N-terminus and includes Ser-3, Ser-4 and Ser-9. The second includes Ser-68, Ser-70, Ser-74, Ser-77, Ser-79, Ser-81, Ser-83, and Ser-84. This cluster of phosphorylation sites, termed cluster II (CII), is important for BCY1 cytoplasmic localization and function. The third cluster of phosphorylated residues consists of Thr-144, Ser-145, Ser-147, Thr-150, and Thr-160. This cluster falls within or near the so-called autoinhibitory domain where the catalytic subunit of PKA autophosphorylates the highly conserved Ser-145 to inhibit BCY1. A last cluster of phosphorylated residues included Thr-129, Ser-130, and Thr-131 and is termed cluster III (CIII). Sites in CIII (and to a lesser extent in CII) are hyperphosphorylated in response to rapamycin.

The protein localises to the cytoplasm. It is found in the nucleus. In terms of biological role, regulatory subunit of the cyclic AMP-dependent protein kinase (PKA), an effector of the Ras/cAMP pathway. Inhibits PKA activity in the absence of cAMP. cAMP activates PKA and promotes growth and proliferation in response to good nutrient conditions. Together with ZDS1, provides a negative feedback control on the cell wall integrity-signaling pathway by acting as a negative regulator of MAP kinase SLT2/MPK1. This is cAMP-dependent protein kinase regulatory subunit (BCY1) from Saccharomyces cerevisiae (strain ATCC 204508 / S288c) (Baker's yeast).